The chain runs to 128 residues: Sulfurtransferase TusD (128 aa).

The Cysteine persulfide intermediate role is filled by Cys78.

It belongs to the DsrE/TusD family. As to quaternary structure, heterohexamer, formed by a dimer of trimers. The hexameric TusBCD complex contains 2 copies each of TusB, TusC and TusD. The TusBCD complex interacts with TusE.

It localises to the cytoplasm. Functionally, part of a sulfur-relay system required for 2-thiolation of 5-methylaminomethyl-2-thiouridine (mnm(5)s(2)U) at tRNA wobble positions. Accepts sulfur from TusA and transfers it in turn to TusE. The chain is Sulfurtransferase TusD from Shigella flexneri serotype 5b (strain 8401).